We begin with the raw amino-acid sequence, 121 residues long: Cell division protein FtsB (121 aa).

Residues 1–6 (MRNWRW) are Cytoplasmic-facing. A helical transmembrane segment spans residues 7–24 (LLLVLAVLLAWLQYRFWF). The Periplasmic portion of the chain corresponds to 25-121 (GPGNSGEVMM…AASADPVDHP (97 aa)). Positions 31–66 (EVMMLEAQVAHQTRDNEGLRQRNQALAAEVKDLKDG) form a coiled coil. The interval 98-121 (PPAAQEAAPPAQPPAASADPVDHP) is disordered.

It belongs to the FtsB family. In terms of assembly, part of a complex composed of FtsB, FtsL and FtsQ.

Its subcellular location is the cell inner membrane. Functionally, essential cell division protein. May link together the upstream cell division proteins, which are predominantly cytoplasmic, with the downstream cell division proteins, which are predominantly periplasmic. The protein is Cell division protein FtsB of Xanthomonas campestris pv. campestris (strain 8004).